A 445-amino-acid polypeptide reads, in one-letter code: POU domain, class 3, transcription factor 2 (445 aa).

Disordered stretches follow at residues 64 to 173 and 203 to 269; these read ALSH…WRSA and LGAG…TPTS. The span at 67–90 shows a compositional bias: gly residues; the sequence is HGGGGGGGGGGGGGGGGGGGGGDG. Composition is skewed to low complexity over residues 125 to 151 and 163 to 173; these read QQQHQQQQQQQQQQQQQQQQQQQQQQQ and HHPGPGAWRSA. Residues 217 to 226 show a composition bias toward basic and acidic residues; sequence LRDAHDEPHH. Basic residues predominate over residues 227 to 237; that stretch reads ADHHPHPHSHP. Over residues 239 to 253 the composition is skewed to pro residues; sequence QQPPPPPPPQGPPGH. In terms of domain architecture, POU-specific spans 264–338; that stretch reads EDTPTSDDLE…LLNKWLEEAD (75 aa). The residue at position 343 (Ser-343) is a Phosphoserine. The segment at residues 356 to 415 is a DNA-binding region (homeobox); sequence KRKKRTSIEVSVKGALESHFLKCPKPSAQEITSLADSLQLEKEVVRVWFCNRRQKEKRMT. The tract at residues 411-445 is disordered; the sequence is EKRMTPPGGTLPGAEDVYGGSRDTPPHHGVQTPVQ.

The protein belongs to the POU transcription factor family. Class-3 subfamily. In terms of assembly, interacts with PQBP1. Interaction with ISL1. Expressed specifically in the neuroectodermal cell lineage.

Its subcellular location is the nucleus. Functionally, transcription factor that plays a key role in neuronal differentiation. Binds preferentially to the recognition sequence which consists of two distinct half-sites, ('GCAT') and ('TAAT'), separated by a non-conserved spacer region of 0, 2, or 3 nucleotides. Acts as a transcriptional activator when binding cooperatively with SOX4, SOX11, or SOX12 to gene promoters. The combination of three transcription factors, ASCL1, POU3F2/BRN2 and MYT1L, is sufficient to reprogram fibroblasts and other somatic cells into induced neuronal (iN) cells in vitro. Acts downstream of ASCL1, accessing chromatin that has been opened by ASCL1, and promotes transcription of neuronal genes. The protein is POU domain, class 3, transcription factor 2 (Pou3f2) of Mus musculus (Mouse).